The following is a 182-amino-acid chain: ATP synthase subunit delta (182 aa).

It belongs to the ATPase delta chain family. F-type ATPases have 2 components, F(1) - the catalytic core - and F(0) - the membrane proton channel. F(1) has five subunits: alpha(3), beta(3), gamma(1), delta(1), epsilon(1). CF(0) has four main subunits: a(1), b(1), b'(1) and c(10-14). The alpha and beta chains form an alternating ring which encloses part of the gamma chain. F(1) is attached to F(0) by a central stalk formed by the gamma and epsilon chains, while a peripheral stalk is formed by the delta, b and b' chains.

It is found in the cellular thylakoid membrane. In terms of biological role, f(1)F(0) ATP synthase produces ATP from ADP in the presence of a proton or sodium gradient. F-type ATPases consist of two structural domains, F(1) containing the extramembraneous catalytic core and F(0) containing the membrane proton channel, linked together by a central stalk and a peripheral stalk. During catalysis, ATP synthesis in the catalytic domain of F(1) is coupled via a rotary mechanism of the central stalk subunits to proton translocation. Its function is as follows. This protein is part of the stalk that links CF(0) to CF(1). It either transmits conformational changes from CF(0) to CF(1) or is implicated in proton conduction. The chain is ATP synthase subunit delta from Microcystis aeruginosa (strain NIES-843 / IAM M-2473).